The chain runs to 1029 residues: Cilia- and flagella-associated protein 91 (1029 aa).

2 disordered regions span residues 72 to 97 (NYRPAANDPNDTRQRSDALAVSGPNR) and 117 to 170 (PPSQ…PWEP). Positions 272–299 (LELLDNALQVREEELDDENRLRVEARKE) form a coiled coil. Low complexity predominate over residues 837–854 (ENQDQQEPQPQPQPSSSS). Disordered stretches follow at residues 837 to 861 (ENQDQQEPQPQPQPSSSSGALDLAD) and 876 to 1029 (GEPS…EAAE). A compositionally biased stretch (acidic residues) spans 890–910 (QQLEADAEAEAEAEAEAEAGA). The segment covering 911 to 921 (EAEASAQAGAE) has biased composition (low complexity). The segment covering 922-932 (AEAEAGVEAEA) has biased composition (acidic residues). Residues 933–944 (EASAGAEASVGA) are compositionally biased toward low complexity. Acidic residues predominate over residues 964-982 (PEAEAEAEAGAEAEAENGA). Residues 984 to 999 (AEARLGGEEEGFREGE) show a composition bias toward basic and acidic residues. Positions 1000–1015 (GQGGAAAGEAGPGGEL) are enriched in gly residues. Residues 1016 to 1029 (AEGEGEAGEGEAAE) show a composition bias toward acidic residues.

This sequence belongs to the CFAP91 family. In terms of assembly, identified in a spoke-associated complex containing CFAP61, CFAP91 and CFAP251; the complex is associated with the radial spokes of the axoneme. The complex associates with Calmodulin; the association is calcium sensitive. Interacts with RSP3.

The protein resides in the cytoplasm. The protein localises to the cytoskeleton. It is found in the flagellum axoneme. Functionally, as component of a spoke-associated complex, regulates flagellar dynein activity by mediating regulatory signals between the radial spokes and dynein arms. In Chlamydomonas reinhardtii (Chlamydomonas smithii), this protein is Cilia- and flagella-associated protein 91.